Here is a 100-residue protein sequence, read N- to C-terminus: MLSQVCRFGTITAVKGGVKKQLKFEDDQTLFTVLTEAGLMSADDTCQGNKACGKCICKHVSGKVAAEDDEKEFLEDQPANARLACAITLSGENDGAVFEL.

Positions 1–8 are excised as a propeptide; that stretch reads MLSQVCRF. The region spanning 9 to 100 is the 2Fe-2S ferredoxin-type domain; it reads GTITAVKGGV…GENDGAVFEL (92 aa). [2Fe-2S] cluster-binding residues include cysteine 46, cysteine 52, cysteine 55, and cysteine 85.

The cofactor is [2Fe-2S] cluster.

Its subcellular location is the hydrogenosome. In terms of biological role, ferredoxins are iron-sulfur proteins that transfer electrons in a wide variety of metabolic reactions. It links pyruvate:ferredoxin oxidoreductase to hydrogenase. This chain is Ferredoxin, found in Trichomonas vaginalis.